The primary structure comprises 58 residues: Succinate dehydrogenase subunit 8B, mitochondrial (58 aa).

Component of complex II composed of eight subunits in plants: four classical SDH subunits SDH1, SDH2, SDH3 and SDH4 (a flavoprotein (FP), an iron-sulfur protein (IP), and a cytochrome b composed of a large and a small subunit.), as well as four subunits unknown in mitochondria from bacteria and heterotrophic eukaryotes.

The protein resides in the mitochondrion inner membrane. Its pathway is carbohydrate metabolism; tricarboxylic acid cycle. The polypeptide is Succinate dehydrogenase subunit 8B, mitochondrial (Oryza sativa subsp. japonica (Rice)).